The sequence spans 84 residues: Small ribosomal subunit protein bS20 (84 aa).

It belongs to the bacterial ribosomal protein bS20 family.

Binds directly to 16S ribosomal RNA. The polypeptide is Small ribosomal subunit protein bS20 (Bacteroides fragilis (strain ATCC 25285 / DSM 2151 / CCUG 4856 / JCM 11019 / LMG 10263 / NCTC 9343 / Onslow / VPI 2553 / EN-2)).